The sequence spans 249 residues: Anti-H(O) lectin 2 (249 aa).

N-linked (GlcNAc...) asparagine glycosylation is present at Asn118. Glu130 and Asp132 together coordinate Mn(2+). Ca(2+) is bound by residues Asp132, Tyr134, Asn140, and Asp145. Residues Asp145 and His148 each coordinate Mn(2+). Asn245 carries N-linked (GlcNAc...) asparagine glycosylation.

The protein belongs to the leguminous lectin family.

Its function is as follows. Di-N-acetylchitobiose specific lectin. This Ulex europaeus (Furze) protein is Anti-H(O) lectin 2.